Here is a 422-residue protein sequence, read N- to C-terminus: Glutamyl-tRNA reductase (422 aa).

Substrate-binding positions include 48–51 (TCNR), S100, 105–107 (EDQ), and Q111. C49 acts as the Nucleophile in catalysis. 180–185 (GTGEMG) contributes to the NADP(+) binding site.

This sequence belongs to the glutamyl-tRNA reductase family. As to quaternary structure, homodimer.

It carries out the reaction (S)-4-amino-5-oxopentanoate + tRNA(Glu) + NADP(+) = L-glutamyl-tRNA(Glu) + NADPH + H(+). It participates in porphyrin-containing compound metabolism; protoporphyrin-IX biosynthesis; 5-aminolevulinate from L-glutamyl-tRNA(Glu): step 1/2. In terms of biological role, catalyzes the NADPH-dependent reduction of glutamyl-tRNA(Glu) to glutamate 1-semialdehyde (GSA). In Methanococcoides burtonii (strain DSM 6242 / NBRC 107633 / OCM 468 / ACE-M), this protein is Glutamyl-tRNA reductase.